A 124-amino-acid polypeptide reads, in one-letter code: Small ribosomal subunit protein uS12 (124 aa).

Asp-89 bears the 3-methylthioaspartic acid mark. Residues 104–124 (SAGVQNRNRGRSKYGTKRPKK) are disordered. A compositionally biased stretch (basic residues) spans 111–124 (NRGRSKYGTKRPKK).

Belongs to the universal ribosomal protein uS12 family. Part of the 30S ribosomal subunit. Contacts proteins S8 and S17. May interact with IF1 in the 30S initiation complex.

Its function is as follows. With S4 and S5 plays an important role in translational accuracy. Functionally, interacts with and stabilizes bases of the 16S rRNA that are involved in tRNA selection in the A site and with the mRNA backbone. Located at the interface of the 30S and 50S subunits, it traverses the body of the 30S subunit contacting proteins on the other side and probably holding the rRNA structure together. The combined cluster of proteins S8, S12 and S17 appears to hold together the shoulder and platform of the 30S subunit. This is Small ribosomal subunit protein uS12 from Pelotomaculum thermopropionicum (strain DSM 13744 / JCM 10971 / SI).